The sequence spans 172 residues: Ribosome maturation factor RimM (172 aa).

Residues 96 to 168 (DGEFYYHEII…RIDVTVLEGL (73 aa)) enclose the PRC barrel domain.

This sequence belongs to the RimM family. Binds ribosomal protein uS19.

The protein resides in the cytoplasm. Its function is as follows. An accessory protein needed during the final step in the assembly of 30S ribosomal subunit, possibly for assembly of the head region. Essential for efficient processing of 16S rRNA. May be needed both before and after RbfA during the maturation of 16S rRNA. It has affinity for free ribosomal 30S subunits but not for 70S ribosomes. The sequence is that of Ribosome maturation factor RimM from Streptococcus mutans serotype c (strain ATCC 700610 / UA159).